A 461-amino-acid chain; its full sequence is Bifunctional protein GlmU (461 aa).

Positions 1–232 (MNLQIIILAA…SFEVQGINNR (232 aa)) are pyrophosphorylase. UDP-N-acetyl-alpha-D-glucosamine is bound by residues 8-11 (LAAG), Lys22, Gln73, and 78-79 (GT). Asp102 is a binding site for Mg(2+). The UDP-N-acetyl-alpha-D-glucosamine site is built by Gly142, Glu157, and Asn230. A Mg(2+)-binding site is contributed by Asn230. The segment at 233 to 253 (QQLQQLERIWQQRAANQLMEK) is linker. The interval 254–461 (GATLADANRF…WKRPVKRERD (208 aa)) is N-acetyltransferase. UDP-N-acetyl-alpha-D-glucosamine contacts are provided by Arg336 and Lys354. His366 acts as the Proton acceptor in catalysis. UDP-N-acetyl-alpha-D-glucosamine-binding residues include Tyr369 and Asn380. Residues Ala383, 389 to 390 (NY), Ser408, and Ala426 contribute to the acetyl-CoA site.

The protein in the N-terminal section; belongs to the N-acetylglucosamine-1-phosphate uridyltransferase family. In the C-terminal section; belongs to the transferase hexapeptide repeat family. As to quaternary structure, homotrimer. Requires Mg(2+) as cofactor.

The protein localises to the cytoplasm. The catalysed reaction is alpha-D-glucosamine 1-phosphate + acetyl-CoA = N-acetyl-alpha-D-glucosamine 1-phosphate + CoA + H(+). It catalyses the reaction N-acetyl-alpha-D-glucosamine 1-phosphate + UTP + H(+) = UDP-N-acetyl-alpha-D-glucosamine + diphosphate. It functions in the pathway nucleotide-sugar biosynthesis; UDP-N-acetyl-alpha-D-glucosamine biosynthesis; N-acetyl-alpha-D-glucosamine 1-phosphate from alpha-D-glucosamine 6-phosphate (route II): step 2/2. The protein operates within nucleotide-sugar biosynthesis; UDP-N-acetyl-alpha-D-glucosamine biosynthesis; UDP-N-acetyl-alpha-D-glucosamine from N-acetyl-alpha-D-glucosamine 1-phosphate: step 1/1. It participates in bacterial outer membrane biogenesis; LPS lipid A biosynthesis. Its function is as follows. Catalyzes the last two sequential reactions in the de novo biosynthetic pathway for UDP-N-acetylglucosamine (UDP-GlcNAc). The C-terminal domain catalyzes the transfer of acetyl group from acetyl coenzyme A to glucosamine-1-phosphate (GlcN-1-P) to produce N-acetylglucosamine-1-phosphate (GlcNAc-1-P), which is converted into UDP-GlcNAc by the transfer of uridine 5-monophosphate (from uridine 5-triphosphate), a reaction catalyzed by the N-terminal domain. This chain is Bifunctional protein GlmU, found in Legionella pneumophila subsp. pneumophila (strain Philadelphia 1 / ATCC 33152 / DSM 7513).